Here is a 408-residue protein sequence, read N- to C-terminus: Repulsive guidance molecule B homolog drag-1 (408 aa).

The signal sequence occupies residues 1–22 (MSIVYLVSITFIFSVFKPITSC). The Extracellular segment spans residues 23 to 387 (RVEECAAWFQ…SEIFKKCIPS (365 aa)). 4 N-linked (GlcNAc...) asparagine glycosylation sites follow: Asn60, Asn134, Asn183, and Asn376. The chain crosses the membrane as a helical span at residues 388 to 408 (KSIRFYPFLAIFFFALLSLLC).

It belongs to the repulsive guidance molecule (RGM) family. In terms of assembly, interacts with unc-40 (via FN6 domain), dbl-1 and sma-6. In terms of tissue distribution, expressed in pharyngeal, hypodermal and intestinal cells.

It localises to the cell membrane. Its function is as follows. Probably in association with the cell surface receptor unc-40, positively modulates the BMP-like Sma/Mab signaling pathway through interaction with both the ligand dbl-1 and its type I receptor sma-6. Regulates body size and this may be through modulation of the Sma/Mab signaling pathway. The polypeptide is Repulsive guidance molecule B homolog drag-1 (Caenorhabditis elegans).